The primary structure comprises 590 residues: Putative sodium/calcium exchanger 6 (590 aa).

The first 19 residues, 1–19 (MRIHFFAFLIILSLVGCDG), serve as a signal peptide directing secretion. 11 consecutive transmembrane segments (helical) span residues 97–117 (IILI…VSSA), 139–159 (VAGV…GAIA), 173–193 (LGEL…VTIF), 208–228 (IAFY…YDHV), 230–250 (IWMP…VILS), 368–388 (PITL…IQVC), 397–417 (PGLW…VLFF), 440–460 (IAWI…LGVV), 499–519 (AAAI…PFTI), 535–555 (YRLL…AMFA), and 568–588 (LVFI…DILV).

Belongs to the Ca(2+):cation antiporter (CaCA) (TC 2.A.19) family.

Its subcellular location is the membrane. This chain is Putative sodium/calcium exchanger 6 (ncx-6), found in Caenorhabditis elegans.